Here is a 146-residue protein sequence, read N- to C-terminus: 3-hydroxyacyl-[acyl-carrier-protein] dehydratase FabZ (146 aa).

His-49 is a catalytic residue.

Belongs to the thioester dehydratase family. FabZ subfamily.

The protein localises to the cytoplasm. It catalyses the reaction a (3R)-hydroxyacyl-[ACP] = a (2E)-enoyl-[ACP] + H2O. Involved in unsaturated fatty acids biosynthesis. Catalyzes the dehydration of short chain beta-hydroxyacyl-ACPs and long chain saturated and unsaturated beta-hydroxyacyl-ACPs. This Pseudomonas savastanoi pv. phaseolicola (strain 1448A / Race 6) (Pseudomonas syringae pv. phaseolicola (strain 1448A / Race 6)) protein is 3-hydroxyacyl-[acyl-carrier-protein] dehydratase FabZ.